We begin with the raw amino-acid sequence, 375 residues long: Tyrosine--tRNA ligase (375 aa).

The L-tyrosine site is built by Tyr37, Tyr168, Gln172, Asp175, and Gln190. The 'KMSKS' region signature appears at 251-255 (KMSKS). An ATP-binding site is contributed by Lys254.

The protein belongs to the class-I aminoacyl-tRNA synthetase family. TyrS type 4 subfamily. As to quaternary structure, homodimer.

The protein localises to the cytoplasm. It carries out the reaction tRNA(Tyr) + L-tyrosine + ATP = L-tyrosyl-tRNA(Tyr) + AMP + diphosphate + H(+). Catalyzes the attachment of tyrosine to tRNA(Tyr) in a two-step reaction: tyrosine is first activated by ATP to form Tyr-AMP and then transferred to the acceptor end of tRNA(Tyr). The protein is Tyrosine--tRNA ligase of Pyrococcus abyssi (strain GE5 / Orsay).